A 395-amino-acid polypeptide reads, in one-letter code: NAD(P)H-quinone oxidoreductase subunit H, chloroplastic (395 aa).

It belongs to the complex I 49 kDa subunit family. NDH is composed of at least 16 different subunits, 5 of which are encoded in the nucleus.

Its subcellular location is the plastid. The protein resides in the chloroplast thylakoid membrane. It carries out the reaction a plastoquinone + NADH + (n+1) H(+)(in) = a plastoquinol + NAD(+) + n H(+)(out). The enzyme catalyses a plastoquinone + NADPH + (n+1) H(+)(in) = a plastoquinol + NADP(+) + n H(+)(out). Functionally, NDH shuttles electrons from NAD(P)H:plastoquinone, via FMN and iron-sulfur (Fe-S) centers, to quinones in the photosynthetic chain and possibly in a chloroplast respiratory chain. The immediate electron acceptor for the enzyme in this species is believed to be plastoquinone. Couples the redox reaction to proton translocation, and thus conserves the redox energy in a proton gradient. This chain is NAD(P)H-quinone oxidoreductase subunit H, chloroplastic, found in Chloranthus spicatus (Chulantree).